The chain runs to 355 residues: N-acetyl-gamma-glutamyl-phosphate reductase (355 aa).

C152 is an active-site residue.

It belongs to the NAGSA dehydrogenase family. Type 1 subfamily.

Its subcellular location is the cytoplasm. It carries out the reaction N-acetyl-L-glutamate 5-semialdehyde + phosphate + NADP(+) = N-acetyl-L-glutamyl 5-phosphate + NADPH + H(+). It participates in amino-acid biosynthesis; L-arginine biosynthesis; N(2)-acetyl-L-ornithine from L-glutamate: step 3/4. Catalyzes the NADPH-dependent reduction of N-acetyl-5-glutamyl phosphate to yield N-acetyl-L-glutamate 5-semialdehyde. In Psychrobacter arcticus (strain DSM 17307 / VKM B-2377 / 273-4), this protein is N-acetyl-gamma-glutamyl-phosphate reductase.